Reading from the N-terminus, the 204-residue chain is Putative AgrB-like protein (204 aa).

Helical transmembrane passes span tyrosine 52–leucine 74, leucine 87–isoleucine 107, asparagine 111–alanine 131, alanine 151–alanine 168, and leucine 173–tyrosine 190.

Belongs to the AgrB family.

It localises to the cell membrane. Its function is as follows. May be involved in the proteolytic processing of a quorum sensing system signal molecule precursor. The sequence is that of Putative AgrB-like protein from Listeria monocytogenes serovar 1/2a (strain ATCC BAA-679 / EGD-e).